Consider the following 391-residue polypeptide: Dual-specificity RNA methyltransferase RlmN (391 aa).

The interval 1-20 (MTSVVADSLTETKTDSQKPI) is disordered. A compositionally biased stretch (basic and acidic residues) spans 10 to 20 (TETKTDSQKPI). Glu120 functions as the Proton acceptor in the catalytic mechanism. The Radical SAM core domain maps to 126 to 366 (DADRGTLCIS…APVRRTRGQD (241 aa)). Cys133 and Cys371 are disulfide-bonded. [4Fe-4S] cluster is bound by residues Cys140, Cys144, and Cys147. S-adenosyl-L-methionine contacts are provided by residues 195–196 (GE), Ser227, 249–251 (SLH), and Asn328. The active-site S-methylcysteine intermediate is the Cys371.

It belongs to the radical SAM superfamily. RlmN family. Requires [4Fe-4S] cluster as cofactor.

Its subcellular location is the cytoplasm. It catalyses the reaction adenosine(2503) in 23S rRNA + 2 reduced [2Fe-2S]-[ferredoxin] + 2 S-adenosyl-L-methionine = 2-methyladenosine(2503) in 23S rRNA + 5'-deoxyadenosine + L-methionine + 2 oxidized [2Fe-2S]-[ferredoxin] + S-adenosyl-L-homocysteine. It carries out the reaction adenosine(37) in tRNA + 2 reduced [2Fe-2S]-[ferredoxin] + 2 S-adenosyl-L-methionine = 2-methyladenosine(37) in tRNA + 5'-deoxyadenosine + L-methionine + 2 oxidized [2Fe-2S]-[ferredoxin] + S-adenosyl-L-homocysteine. Functionally, specifically methylates position 2 of adenine 2503 in 23S rRNA and position 2 of adenine 37 in tRNAs. m2A2503 modification seems to play a crucial role in the proofreading step occurring at the peptidyl transferase center and thus would serve to optimize ribosomal fidelity. The polypeptide is Dual-specificity RNA methyltransferase RlmN (Zymomonas mobilis subsp. mobilis (strain ATCC 31821 / ZM4 / CP4)).